A 219-amino-acid polypeptide reads, in one-letter code: N-(5'-phosphoribosyl)anthranilate isomerase (219 aa).

The protein belongs to the TrpF family.

The enzyme catalyses N-(5-phospho-beta-D-ribosyl)anthranilate = 1-(2-carboxyphenylamino)-1-deoxy-D-ribulose 5-phosphate. It participates in amino-acid biosynthesis; L-tryptophan biosynthesis; L-tryptophan from chorismate: step 3/5. This Bordetella avium (strain 197N) protein is N-(5'-phosphoribosyl)anthranilate isomerase.